We begin with the raw amino-acid sequence, 555 residues long: Probable terpene synthase 6 (555 aa).

3 residues coordinate Mg(2+): Asp309, Asp313, and Glu460. Positions 309 to 313 (DDTYD) match the DDXXD motif motif.

Belongs to the terpene synthase family. Mg(2+) is required as a cofactor.

Its function is as follows. Probable sesquiterpene synthase. The chain is Probable terpene synthase 6 (TPS6) from Ricinus communis (Castor bean).